Here is a 501-residue protein sequence, read N- to C-terminus: HMG-box protein STE11 (501 aa).

Positions 142-153 are enriched in polar residues; sequence PVNMVGSLSGSP. Disordered stretches follow at residues 142-205 and 246-293; these read PVNM…KRPL and YAEM…SLEQ. Residues 192–204 are compositionally biased toward low complexity; the sequence is SRSGSSSSGIKRP. The HMG box DNA-binding region spans 201-265; the sequence is IKRPLNSFML…RHAKEYPDYK (65 aa). Positions 246 to 263 are enriched in basic and acidic residues; it reads YAEMAQRERERHAKEYPD.

Post-translationally, phosphorylated by MAPK2.

Its subcellular location is the nucleus. This chain is HMG-box protein STE11, found in Pneumocystis carinii.